Consider the following 557-residue polypeptide: Membrane protein insertase YidC (557 aa).

Residues 3 to 23 (NLRPVLYLSMLLVLFLIWQAW) form a helical membrane-spanning segment. Residues 34–60 (APGAQEQVMDRDGVPAPPQDVPDAPVS) form a disordered region. 4 helical membrane-spanning segments follow: residues 366–386 (VVGN…LVFY), 436–456 (LGGC…YWVL), 480–500 (YFIL…LNPA), and 514–534 (PFVF…YWFV).

It belongs to the OXA1/ALB3/YidC family. Type 1 subfamily. Interacts with the Sec translocase complex via SecD. Specifically interacts with transmembrane segments of nascent integral membrane proteins during membrane integration.

Its subcellular location is the cell inner membrane. Required for the insertion and/or proper folding and/or complex formation of integral membrane proteins into the membrane. Involved in integration of membrane proteins that insert both dependently and independently of the Sec translocase complex, as well as at least some lipoproteins. Aids folding of multispanning membrane proteins. The protein is Membrane protein insertase YidC of Thioalkalivibrio sulfidiphilus (strain HL-EbGR7).